Here is a 737-residue protein sequence, read N- to C-terminus: Procollagen-lysine,2-oxoglutarate 5-dioxygenase 2 (737 aa).

An N-terminal signal peptide occupies residues 1–25 (MGDRGARPGRLMPMLALLSWAAGLG). Residues Asn63 and Asn209 are each glycosylated (N-linked (GlcNAc...) asparagine). Phosphothreonine is present on Thr320. Residue Tyr323 is modified to Phosphotyrosine. 2 N-linked (GlcNAc...) asparagine glycosylation sites follow: Asn365 and Asn522. Residues 644–737 (KGFALLNFVV…RYIAVSFIDP (94 aa)) form the Fe2OG dioxygenase domain. 2 residues coordinate Fe cation: His666 and Asp668. N-linked (GlcNAc...) asparagine glycosylation is present at Asn696. Lys704 bears the N6-succinyllysine mark. A Fe cation-binding site is contributed by His718. The N-linked (GlcNAc...) asparagine glycan is linked to Asn725. Arg728 is an active-site residue.

In terms of assembly, homodimer. Requires Fe(2+) as cofactor. The cofactor is L-ascorbate. In terms of tissue distribution, is highly expressed in the heart, lung, kidney, eye, ovary and placenta.

It is found in the rough endoplasmic reticulum membrane. It carries out the reaction L-lysyl-[collagen] + 2-oxoglutarate + O2 = (5R)-5-hydroxy-L-lysyl-[collagen] + succinate + CO2. Its function is as follows. Forms hydroxylysine residues in -Xaa-Lys-Gly- sequences in collagens. These hydroxylysines serve as sites of attachment for carbohydrate units and are essential for the stability of the intermolecular collagen cross-links. The protein is Procollagen-lysine,2-oxoglutarate 5-dioxygenase 2 (Plod2) of Mus musculus (Mouse).